We begin with the raw amino-acid sequence, 127 residues long: Large ribosomal subunit protein eL8 (127 aa).

The protein belongs to the eukaryotic ribosomal protein eL8 family. Part of the 50S ribosomal subunit. Probably part of the RNase P complex.

The protein localises to the cytoplasm. Multifunctional RNA-binding protein that recognizes the K-turn motif in ribosomal RNA, the RNA component of RNase P, box H/ACA, box C/D and box C'/D' sRNAs. The chain is Large ribosomal subunit protein eL8 from Hyperthermus butylicus (strain DSM 5456 / JCM 9403 / PLM1-5).